Reading from the N-terminus, the 488-residue chain is Protein DETOXIFICATION 35 (488 aa).

The next 12 membrane-spanning stretches (helical) occupy residues leucine 38–valine 58, alanine 73–glycine 93, isoleucine 121–leucine 141, isoleucine 150–phenylalanine 170, isoleucine 187–isoleucine 207, leucine 218–tryptophan 238, isoleucine 262–threonine 282, serine 296–isoleucine 316, valine 336–isoleucine 356, alanine 379–glycine 401, valine 408–glycine 428, and tryptophan 439–lysine 459.

The protein belongs to the multi antimicrobial extrusion (MATE) (TC 2.A.66.1) family. As to expression, highly expressed in inflorescence tissues, especially in floral epidermal guard cells including those of the anthers, stigma, siliques and nectaries. Also detected in the meristematic zone of the root apex and in the elongation zone through to the fully expanded cells of the differentiation zone.

The protein resides in the vacuole membrane. Multidrug and toxin efflux transporter involved in flavonoid metabolism. Required for proper reproductive development. In Arabidopsis thaliana (Mouse-ear cress), this protein is Protein DETOXIFICATION 35.